We begin with the raw amino-acid sequence, 389 residues long: Sulfate adenylyltransferase (389 aa).

The protein belongs to the sulfate adenylyltransferase family.

The catalysed reaction is sulfate + ATP + H(+) = adenosine 5'-phosphosulfate + diphosphate. The protein operates within sulfur metabolism; hydrogen sulfide biosynthesis; sulfite from sulfate: step 1/3. This Hyperthermus butylicus (strain DSM 5456 / JCM 9403 / PLM1-5) protein is Sulfate adenylyltransferase.